The chain runs to 355 residues: Protein FIP1 (355 aa).

The next 4 membrane-spanning stretches (helical) occupy residues 42-62, 72-92, 113-133, and 149-169; these read YLYM…PWMF, LLCC…QYFV, VVRL…LVIV, and IIML…IGYV. The stretch at 220 to 337 forms a coiled coil; the sequence is LHFLSEEILC…RMSNSELQKE (118 aa). A compositionally biased stretch (basic and acidic residues) spans 331-340; it reads NSELQKEVAS. Residues 331-355 form a disordered region; sequence NSELQKEVASTRRKQMLETTTSEQP.

The protein belongs to the TMEM192 family. Interacts with FRI.

It localises to the membrane. This chain is Protein FIP1, found in Arabidopsis thaliana (Mouse-ear cress).